The sequence spans 122 residues: MPTQPSRDLQTFPNPKPGRPFEIAMECPEFTCVCPMTGQPDFATIRLRYVPAERCVELKSLKLYLWSFRDEGTFHEAVTNRICDDLVAALAPRWIEVVGDFAVRGGIHTVVTARHGERPAGV.

Residue cysteine 34 is the Thioimide intermediate of the active site. Residue aspartate 41 is the Proton donor of the active site. Substrate-binding positions include 56-58 and 75-76; these read VEL and HE.

Belongs to the GTP cyclohydrolase I family. QueF type 1 subfamily.

The protein resides in the cytoplasm. The enzyme catalyses 7-aminomethyl-7-carbaguanine + 2 NADP(+) = 7-cyano-7-deazaguanine + 2 NADPH + 3 H(+). It participates in tRNA modification; tRNA-queuosine biosynthesis. Its function is as follows. Catalyzes the NADPH-dependent reduction of 7-cyano-7-deazaguanine (preQ0) to 7-aminomethyl-7-deazaguanine (preQ1). The polypeptide is NADPH-dependent 7-cyano-7-deazaguanine reductase (Anaeromyxobacter dehalogenans (strain 2CP-C)).